Reading from the N-terminus, the 150-residue chain is 3-hydroxyacyl-[acyl-carrier-protein] dehydratase FabZ (150 aa).

His-54 is a catalytic residue.

Belongs to the thioester dehydratase family. FabZ subfamily.

It localises to the cytoplasm. It carries out the reaction a (3R)-hydroxyacyl-[ACP] = a (2E)-enoyl-[ACP] + H2O. Involved in unsaturated fatty acids biosynthesis. Catalyzes the dehydration of short chain beta-hydroxyacyl-ACPs and long chain saturated and unsaturated beta-hydroxyacyl-ACPs. This is 3-hydroxyacyl-[acyl-carrier-protein] dehydratase FabZ from Aliivibrio fischeri (strain ATCC 700601 / ES114) (Vibrio fischeri).